We begin with the raw amino-acid sequence, 211 residues long: tRNA (guanine-N(7)-)-methyltransferase (211 aa).

Residues Glu44, Asp69, Asp96, and Asp118 each coordinate S-adenosyl-L-methionine. The active site involves Asp118. Residue Lys122 coordinates substrate. The segment at Arg124–Arg129 is interaction with RNA. Residues Asp154 and Thr191 to Glu194 contribute to the substrate site.

This sequence belongs to the class I-like SAM-binding methyltransferase superfamily. TrmB family.

It carries out the reaction guanosine(46) in tRNA + S-adenosyl-L-methionine = N(7)-methylguanosine(46) in tRNA + S-adenosyl-L-homocysteine. It participates in tRNA modification; N(7)-methylguanine-tRNA biosynthesis. Functionally, catalyzes the formation of N(7)-methylguanine at position 46 (m7G46) in tRNA. The protein is tRNA (guanine-N(7)-)-methyltransferase of Streptococcus pneumoniae (strain CGSP14).